A 203-amino-acid polypeptide reads, in one-letter code: MACGATLKRTLDFDPLLSPASPKRRRCAPLSAPTSAAASPSSAAAATAASFSAAAASPQKYLRMEPSPFGDVSSRLTTEQILYNIKQEYKRMQKRRHLETSFQQTDPCCTSDAQPHAFLLSGPASPGTPSATSSPLKKEQPLFTLRQVGMICERLLKEREEKVREEYEEILNTKLAEQYDAFVKFTHDQIMRRYGEQPASYVS.

Ser-18 and Ser-21 each carry phosphoserine. The short motif at 22-27 (PKRRRC) is the Nuclear localization signal element. Residue Ser-57 is modified to Phosphoserine. The SYVS motif signature appears at 200–203 (SYVS).

This sequence belongs to the akirin family. Homodimer. Interacts with IPO9; the interaction is direct. Associates with 20S and 26S proteasomes. Interacts with SMARCD1; promoting SWI/SNF complex recruitment. Interacts with NFKBIZ. Interacts with YWHAB. In terms of processing, polyubiquitinated. Polyubiquitination is dependent of UBR5 that extends pre-ubiquitinated AKIRIN2. Widely expressed. Most abundant in the lung, followed by the skeletal muscle, heart, liver, fat, thymus, lymph node, small intestine, kidney and spleen. In skeletal muscle, expressed at higher level in fast extensor digitorum longus (EDL) and longissimus lumborum (LL) muscles than in slow soleus (SOL) muscles.

It localises to the nucleus. Its subcellular location is the cytoplasm. It is found in the membrane. Its function is as follows. Molecular adapter that acts as a bridge between a variety of multiprotein complexes, and which is involved in embryonic development, immunity, myogenesis and brain development. Plays a key role in nuclear protein degradation by promoting import of proteasomes into the nucleus: directly binds to fully assembled 20S proteasomes at one end and to nuclear import receptor IPO9 at the other end, bridging them together and mediating the import of pre-assembled proteasome complexes through the nuclear pore. Involved in innate immunity by regulating the production of interleukin-6 (IL6) downstream of Toll-like receptor (TLR): acts by bridging the NF-kappa-B inhibitor NFKBIZ and the SWI/SNF complex, leading to promote induction of IL6. Also involved in adaptive immunity by promoting B-cell activation. Involved in brain development: required for the survival and proliferation of cerebral cortical progenitor cells. Involved in myogenesis: required for skeletal muscle formation and skeletal development, possibly by regulating expression of muscle differentiation factors. This Sus scrofa (Pig) protein is Akirin-2.